The following is a 164-amino-acid chain: Peptidyl-prolyl cis-trans isomerase B (164 aa).

Positions 1-162 (MVTFHTNHGD…EDVIIESVTV (162 aa)) constitute a PPIase cyclophilin-type domain.

This sequence belongs to the cyclophilin-type PPIase family.

Its subcellular location is the cytoplasm. It catalyses the reaction [protein]-peptidylproline (omega=180) = [protein]-peptidylproline (omega=0). Its activity is regulated as follows. Inhibition by cyclosporin A with a Ki of 25 to 50 mu-mol, a concentration 1000-fold higher than that required for eukaryotic PPIases. Functionally, PPIases accelerate the folding of proteins. It catalyzes the cis-trans isomerization of proline imidic peptide bonds in oligopeptides. This is Peptidyl-prolyl cis-trans isomerase B (ppiB) from Escherichia coli (strain K12).